Here is a 149-residue protein sequence, read N- to C-terminus: Large ribosomal subunit protein bL9 (149 aa).

Belongs to the bacterial ribosomal protein bL9 family.

Binds to the 23S rRNA. This Thermotoga petrophila (strain ATCC BAA-488 / DSM 13995 / JCM 10881 / RKU-1) protein is Large ribosomal subunit protein bL9.